A 125-amino-acid polypeptide reads, in one-letter code: Ribosome-binding factor A (125 aa).

This sequence belongs to the RbfA family. Monomer. Binds 30S ribosomal subunits, but not 50S ribosomal subunits or 70S ribosomes.

The protein resides in the cytoplasm. Its function is as follows. One of several proteins that assist in the late maturation steps of the functional core of the 30S ribosomal subunit. Associates with free 30S ribosomal subunits (but not with 30S subunits that are part of 70S ribosomes or polysomes). Required for efficient processing of 16S rRNA. May interact with the 5'-terminal helix region of 16S rRNA. The chain is Ribosome-binding factor A from Paracidovorax citrulli (strain AAC00-1) (Acidovorax citrulli).